A 155-amino-acid chain; its full sequence is Ribosomal RNA large subunit methyltransferase H (155 aa).

Residues Leu-72, Gly-103, and 122–127 (LSPLTL) each bind S-adenosyl-L-methionine.

It belongs to the RNA methyltransferase RlmH family. In terms of assembly, homodimer.

It is found in the cytoplasm. It catalyses the reaction pseudouridine(1915) in 23S rRNA + S-adenosyl-L-methionine = N(3)-methylpseudouridine(1915) in 23S rRNA + S-adenosyl-L-homocysteine + H(+). Specifically methylates the pseudouridine at position 1915 (m3Psi1915) in 23S rRNA. In Pasteurella multocida (strain Pm70), this protein is Ribosomal RNA large subunit methyltransferase H.